A 423-amino-acid polypeptide reads, in one-letter code: CinA-like protein (423 aa).

It belongs to the CinA family.

The protein is CinA-like protein of Prochlorococcus marinus (strain SARG / CCMP1375 / SS120).